We begin with the raw amino-acid sequence, 461 residues long: Fumarate hydratase class II (461 aa).

Substrate is bound by residues 97–99 (SGT), 127–130 (HPND), 137–139 (SSN), and T185. H186 serves as the catalytic Proton donor/acceptor. S316 is a catalytic residue. Residues S317 and 322 to 324 (KVN) contribute to the substrate site.

The protein belongs to the class-II fumarase/aspartase family. Fumarase subfamily. In terms of assembly, homotetramer.

Its subcellular location is the cytoplasm. The enzyme catalyses (S)-malate = fumarate + H2O. It participates in carbohydrate metabolism; tricarboxylic acid cycle; (S)-malate from fumarate: step 1/1. Involved in the TCA cycle. Catalyzes the stereospecific interconversion of fumarate to L-malate. This Staphylococcus aureus (strain MSSA476) protein is Fumarate hydratase class II.